The primary structure comprises 394 residues: Ceramide glucosyltransferase (394 aa).

The Lumenal portion of the chain corresponds to 1-10 (MALLDLALEG). Residues 11–32 (MAVFGFVLFLVLWLMHFMAIIY) form a helical membrane-spanning segment. Residues 33 to 195 (TRLHLNKKAT…QVYFGTSHPR (163 aa)) lie on the Cytoplasmic side of the membrane. Residue aspartate 92 is a short sequence motif, D1. Lysine 117 is subject to N6-acetyllysine. A short sequence motif (D2) is located at residue aspartate 144. A helical transmembrane segment spans residues 196–215 (YYISANVTGFKCVTGMSCLM). The Lumenal segment spans residues 216–287 (RKDVLDQAGG…KLRINMLPAT (72 aa)). Residue aspartate 236 is a short sequence motif, D3. Aspartate 236 functions as the Proton acceptor in the catalytic mechanism. Residues 272–276 (RMIRW) carry the (Q/R)XXRW motif. The chain crosses the membrane as a helical span at residues 288-304 (IICEPISECFVASLIIG). Topologically, residues 305-309 (WAAHH) are cytoplasmic. Residues 310–328 (VFRWDIMVFFMCHCLAWFI) form a helical membrane-spanning segment. Residues 329-348 (FDYIQLRGVQGGTLCFSKLD) lie on the Lumenal side of the membrane. Residues 349–369 (YAVAWFIRESMTIYIFLSALW) traverse the membrane as a helical segment. The Cytoplasmic segment spans residues 370-394 (DPTISWRTGRYRLRCGGTAEEILDV).

It belongs to the glycosyltransferase 2 family. Interacts with RTN1; regulates the ceramide glucosyltransferase activity of UGCG. As to expression, found in all tissues examined.

It is found in the golgi apparatus membrane. The catalysed reaction is an N-acylsphing-4-enine + UDP-alpha-D-glucose = a beta-D-glucosyl-(1&lt;-&gt;1')-N-acylsphing-4-enine + UDP + H(+). The enzyme catalyses UDP-alpha-D-xylose + an N-acylsphing-4-enine = a beta-D-xylosyl-(1&lt;-&gt;1')-N-acylsphing-4-enine + UDP + H(+). It carries out the reaction N-(9Z-octadecenoyl)-sphing-4-enine + UDP-alpha-D-xylose = beta-D-xylosyl-(1&lt;-&gt;1')-N-(9Z-octadecenoyl)-sphing-4-enine + UDP + H(+). It functions in the pathway lipid metabolism; sphingolipid metabolism. Functionally, participates in the initial step of the glucosylceramide-based glycosphingolipid/GSL synthetic pathway at the cytosolic surface of the Golgi. Catalyzes the transfer of glucose from UDP-glucose to ceramide to produce glucosylceramide/GlcCer (such as beta-D-glucosyl-(1&lt;-&gt;1')-N-acylsphing-4-enine). GlcCer is the core component of glycosphingolipids/GSLs, amphipathic molecules consisting of a ceramide lipid moiety embedded in the outer leaflet of the membrane, linked to one of hundreds of different externally oriented oligosaccharide structures. Glycosphingolipids are essential components of membrane microdomains that mediate membrane trafficking and signal transduction, implicated in many fundamental cellular processes, including growth, differentiation, migration, morphogenesis, cell-to-cell and cell-to-matrix interactions. They are required for instance in the proper development and functioning of the nervous system. As an example of their role in signal transduction, they regulate the leptin receptor/LEPR in the leptin-mediated signaling pathway. They also play an important role in the establishment of the skin barrier regulating keratinocyte differentiation and the proper assembly of the cornified envelope. The biosynthesis of GSLs is also required for the proper intestinal endocytic uptake of nutritional lipids. Catalyzes the synthesis of xylosylceramide/XylCer (such as beta-D-xylosyl-(1&lt;-&gt;1')-N-acylsphing-4-enine) using UDP-Xyl as xylose donor. The polypeptide is Ceramide glucosyltransferase (Homo sapiens (Human)).